The primary structure comprises 312 residues: Deoxyribonuclease Tat-D (312 aa).

A divalent metal cation is bound by residues Glu124, His161, His187, and Asp235.

The protein belongs to the metallo-dependent hydrolases superfamily. TatD-type hydrolase family. Requires a divalent metal cation as cofactor.

It is found in the cytoplasm. The protein resides in the nucleus. Its function is as follows. Has both endo- and exonuclease activities. Incises double-stranded DNA without obvious specificity via its endonuclease activity and excises the DNA from the 3'-to 5'-end by its exonuclease activity. May have a role in apoptosis. This Schizosaccharomyces pombe (strain 972 / ATCC 24843) (Fission yeast) protein is Deoxyribonuclease Tat-D.